Reading from the N-terminus, the 101-residue chain is Apolipoprotein C-II (101 aa).

The signal sequence occupies residues 1-22 (MGTRFLLALCLVLLVLGFEVQG). Residues 66 to 74 (AVDEKLRDL) form a lipid binding region. Residues 78 to 101 (STAAMSTYTGIFTDQVLSVLKGEE) are lipoprotein lipase cofactor.

The protein belongs to the apolipoprotein C2 family. Post-translationally, proapolipoprotein C-II is synthesized as a sialic acid containing glycoprotein which is subsequently desialylated prior to its proteolytic processing. In terms of processing, proapolipoprotein C-II, the major form found in plasma undergoes proteolytic cleavage of its N-terminal hexapeptide to generate apolipoprotein C-II, which occurs as the minor form in plasma.

It is found in the secreted. In terms of biological role, component of chylomicrons, very low-density lipoproteins (VLDL), low-density lipoproteins (LDL), and high-density lipoproteins (HDL) in plasma. Plays an important role in lipoprotein metabolism as an activator of lipoprotein lipase. Both proapolipoprotein C-II and apolipoprotein C-II can activate lipoprotein lipase. This Colobus guereza (Mantled guereza) protein is Apolipoprotein C-II (APOC2).